The chain runs to 359 residues: Small ribosomal subunit protein mS22 (359 aa).

It belongs to the mitochondrion-specific ribosomal protein mS22 family. As to quaternary structure, component of the mitochondrial ribosome small subunit (28S) which comprises a 12S rRNA and about 30 distinct proteins.

The protein localises to the mitochondrion. The polypeptide is Small ribosomal subunit protein mS22 (MRPS22) (Bos taurus (Bovine)).